Here is a 258-residue protein sequence, read N- to C-terminus: Tryptophan synthase alpha chain (258 aa).

Catalysis depends on proton acceptor residues Glu47 and Asp58.

It belongs to the TrpA family. As to quaternary structure, tetramer of two alpha and two beta chains.

It catalyses the reaction (1S,2R)-1-C-(indol-3-yl)glycerol 3-phosphate + L-serine = D-glyceraldehyde 3-phosphate + L-tryptophan + H2O. It functions in the pathway amino-acid biosynthesis; L-tryptophan biosynthesis; L-tryptophan from chorismate: step 5/5. In terms of biological role, the alpha subunit is responsible for the aldol cleavage of indoleglycerol phosphate to indole and glyceraldehyde 3-phosphate. This chain is Tryptophan synthase alpha chain, found in Bacillus cereus (strain B4264).